The chain runs to 39 residues: Non-specific lipid-transfer protein (39 aa).

The protein belongs to the plant LTP family.

In terms of biological role, plant non-specific lipid-transfer proteins transfer phospholipids as well as galactolipids across membranes. May play a role in wax or cutin deposition in the cell walls of expanding epidermal cells and certain secretory tissues. The sequence is that of Non-specific lipid-transfer protein from Musa acuminata (Banana).